Reading from the N-terminus, the 288-residue chain is Bis(5'-nucleosyl)-tetraphosphatase, symmetrical (288 aa).

This sequence belongs to the Ap4A hydrolase family.

The catalysed reaction is P(1),P(4)-bis(5'-adenosyl) tetraphosphate + H2O = 2 ADP + 2 H(+). In terms of biological role, hydrolyzes diadenosine 5',5'''-P1,P4-tetraphosphate to yield ADP. In Pseudomonas putida (strain W619), this protein is Bis(5'-nucleosyl)-tetraphosphatase, symmetrical.